Consider the following 88-residue polypeptide: MSDEQKTKLIELKQKVNDLEFELDKIKNEFMMKIIIAVILIFFLTIVGLFYLIINLSRIISLNQKRKSLELKTKELNHEINKIEISLL.

Residues 34–54 traverse the membrane as a helical segment; sequence IIIAVILIFFLTIVGLFYLII.

It localises to the membrane. This is an uncharacterized protein from Ureaplasma parvum serovar 3 (strain ATCC 700970).